Here is a 1212-residue protein sequence, read N- to C-terminus: Histone demethylase UTY (1212 aa).

8 TPR repeats span residues 88-121, 125-158, 165-193, 200-233, 245-278, 279-312, 313-346, and 347-380; these read SDFF…QTDY, AAFL…DPNF, HLRL…IDCN, VEIQ…ESLP, GWMH…DPNS, GQSW…SEAS, ADTW…DHGH, and AAAW…KSCN. The span at 530 to 539 shows a compositional bias: basic and acidic residues; sequence FTKESKDSRS. The disordered stretch occupies residues 530–555; that stretch reads FTKESKDSRSKSLTSKTSRKDRDTSN. T752 is modified (phosphothreonine). Positions 865–886 are disordered; it reads RRTQVKDYSDNESTCSDNSGRR. A JmjC domain is found at 907 to 1070; the sequence is KWKLQLHELT…YKLAVERYEW (164 aa). Residues H958, E960, and H1038 each contribute to the Fe cation site. 4 residues coordinate Zn(2+): C1143, C1146, C1170, and C1173.

Belongs to the UTX family. Binds TLE1 and TLE2. L-ascorbate serves as cofactor. It depends on Fe(2+) as a cofactor.

It localises to the nucleus. It carries out the reaction N(6),N(6),N(6)-trimethyl-L-lysyl(27)-[histone H3] + 2 2-oxoglutarate + 2 O2 = N(6)-methyl-L-lysyl(27)-[histone H3] + 2 formaldehyde + 2 succinate + 2 CO2. Male-specific histone demethylase that catalyzes trimethylated 'Lys-27' (H3K27me3) demethylation in histone H3. Has relatively low KDM activity. This chain is Histone demethylase UTY (Uty), found in Mus musculus (Mouse).